The following is a 155-amino-acid chain: MSRRSNTVSRPTKPDPIYRNRLVNMLVNRILKNGKKSLGYRILYTALKTIKQKTKKNPLSVLRQAVRRATPNVVVKARRRGGSTYQVPIEVKPSQGRALAIRWLLSAARKRSGRSMGLKLSYELMDAARQTGNAIRKREETHRMAEANRAFAHFR.

The protein belongs to the universal ribosomal protein uS7 family. In terms of assembly, part of the 30S ribosomal subunit.

It localises to the plastid. It is found in the chloroplast. Functionally, one of the primary rRNA binding proteins, it binds directly to 16S rRNA where it nucleates assembly of the head domain of the 30S subunit. This chain is Small ribosomal subunit protein uS7c (rps7), found in Spirogyra maxima (Green alga).